The following is a 294-amino-acid chain: Putative S-adenosyl-L-methionine-dependent methyltransferase RHA1_ro00605 (294 aa).

S-adenosyl-L-methionine is bound by residues aspartate 120 and 149-150 (DL).

The protein belongs to the UPF0677 family.

Its function is as follows. Exhibits S-adenosyl-L-methionine-dependent methyltransferase activity. The chain is Putative S-adenosyl-L-methionine-dependent methyltransferase RHA1_ro00605 from Rhodococcus jostii (strain RHA1).